The chain runs to 425 residues: Cell adhesion molecule CEACAM16 (425 aa).

Residues 1–20 (MALTGYSWLLLSATFLNVGA) form the signal peptide. N-linked (GlcNAc...) asparagine glycosylation is present at Asn-36. 2 Ig-like C2-type domains span residues 133–218 (PTVL…INLT) and 223–309 (PERV…ASVV). Cys-153 and Cys-201 form a disulfide bridge. The N-linked (GlcNAc...) asparagine glycan is linked to Asn-216. Cys-252 and Cys-293 are disulfide-bonded. N-linked (GlcNAc...) asparagine glycosylation occurs at Asn-394.

The protein belongs to the immunoglobulin superfamily. CEA family. In terms of assembly, homooligomer; can for homodimers and homotetramers. Interacts with TECTA and TECTB.

Its subcellular location is the secreted. Its function is as follows. Required for proper hearing, plays a role in maintaining the integrity of the tectorial membrane. The chain is Cell adhesion molecule CEACAM16 from Homo sapiens (Human).